The sequence spans 318 residues: Myoblast determination protein 1 (318 aa).

Residue Met-1 forms a Peptide (Met-Gly) (interchain with G-Cter in ubiquitin) linkage. Lys-104 is subject to N6-methyllysine; by EHMT2. The 52-residue stretch at 109 to 160 (DRRKAATMRERRRLSKVNEAFETLKRCTSSNPNQRLPKVEILRNAIRYIEGL) folds into the bHLH domain. Disordered stretches follow at residues 175–225 (AAFY…QNGY) and 265–318 (APAL…YQVL). The span at 196-206 (SDASSPRSNCS) shows a compositional bias: polar residues. The span at 265–274 (APALLLADAP) shows a compositional bias: low complexity. Composition is skewed to polar residues over residues 287–298 (LSDTEQGTQTPS) and 307–318 (AGSNPNAIYQVL).

Interacts with SUV39H1. Efficient DNA binding requires dimerization with another bHLH protein. Seems to form active heterodimers with ITF-2. Interacts with DDX5. Interacts with CHD2. Interacts with TSC22D3 isoform 1 and isoform 4. Interacts with SETD3. Interacts with P-TEFB complex; promotes the transcriptional activity of MYOD1 through its CDK9-mediated phosphorylation. Interacts with CSRP3. Interacts with NUPR1. Acetylated by a complex containing EP300 and PCAF. The acetylation is essential to activate target genes. Conversely, its deacetylation by SIRT1 inhibits its function. Post-translationally, ubiquitinated on the N-terminus; which is required for proteasomal degradation. In terms of processing, phosphorylated by CDK9. This phosphorylation promotes its function in muscle differentiation. Methylation at Lys-104 by EHMT2/G9a inhibits myogenic activity.

The protein localises to the nucleus. Functionally, acts as a transcriptional activator that promotes transcription of muscle-specific target genes and plays a role in muscle differentiation. Together with MYF5 and MYOG, co-occupies muscle-specific gene promoter core region during myogenesis. Induces fibroblasts to differentiate into myoblasts. Interacts with and is inhibited by the twist protein. This interaction probably involves the basic domains of both proteins. The chain is Myoblast determination protein 1 (Myod1) from Mus musculus (Mouse).